Here is an 802-residue protein sequence, read N- to C-terminus: ATP-dependent zinc metalloprotease FTSH 3, mitochondrial (802 aa).

The transit peptide at 1–21 (MSLSSLSRALARSARSSRQRQ) directs the protein to the mitochondrion. The segment covering 1–23 (MSLSSLSRALARSARSSRQRQGS) has biased composition (low complexity). Disordered stretches follow at residues 1–33 (MSLS…GLRA) and 85–120 (DKSK…SGDQ). A compositionally biased stretch (basic and acidic residues) spans 85 to 113 (DKSKKNHGKHSEEENKGKGDESDKSDSKK). A helical transmembrane segment spans residues 133–153 (MIAPLFLFGLLLLSASASSSE). Residue 360–367 (GPPGTGKT) coordinates ATP. Residue His-585 participates in Zn(2+) binding. Glu-586 is a catalytic residue. Zn(2+) contacts are provided by His-589 and Asp-661. Residues 773 to 802 (KQGFQDEDSNRNAELSNADGASSLGEAVAS) are disordered.

This sequence in the N-terminal section; belongs to the AAA ATPase family. In the C-terminal section; belongs to the peptidase M41 family. Zn(2+) is required as a cofactor.

Its subcellular location is the mitochondrion inner membrane. Its function is as follows. Probable ATP-dependent zinc metallopeptidase. The chain is ATP-dependent zinc metalloprotease FTSH 3, mitochondrial (FTSH3) from Oryza sativa subsp. japonica (Rice).